A 286-amino-acid chain; its full sequence is Undecaprenyl-diphosphatase (286 aa).

8 helical membrane-spanning segments follow: residues 17 to 37, 49 to 69, 98 to 118, 126 to 146, 159 to 179, 204 to 224, 232 to 252, and 261 to 281; these read VVLG…TAHL, PGVA…IGYF, IAIA…KLFW, LRSV…LALA, VQGL…IPGV, FLLG…GAFA, LPML…IAWL, and TWPF…LVLA.

Belongs to the UppP family.

The protein resides in the cell inner membrane. It catalyses the reaction di-trans,octa-cis-undecaprenyl diphosphate + H2O = di-trans,octa-cis-undecaprenyl phosphate + phosphate + H(+). Catalyzes the dephosphorylation of undecaprenyl diphosphate (UPP). Confers resistance to bacitracin. The protein is Undecaprenyl-diphosphatase of Synechococcus sp. (strain RCC307).